Consider the following 278-residue polypeptide: S-formylglutathione hydrolase YeiG (278 aa).

Residues Ser-145, Asp-223, and His-256 each act as charge relay system in the active site.

The protein belongs to the esterase D family.

The enzyme catalyses S-formylglutathione + H2O = formate + glutathione + H(+). Serine hydrolase involved in the detoxification of formaldehyde. Hydrolyzes S-formylglutathione to glutathione and formate. This is S-formylglutathione hydrolase YeiG (yeiG) from Shigella dysenteriae serotype 1 (strain Sd197).